We begin with the raw amino-acid sequence, 221 residues long: Translation initiation factor 6 (221 aa).

Belongs to the eIF-6 family.

Its function is as follows. Binds to the 50S ribosomal subunit and prevents its association with the 30S ribosomal subunit to form the 70S initiation complex. This chain is Translation initiation factor 6, found in Methanopyrus kandleri (strain AV19 / DSM 6324 / JCM 9639 / NBRC 100938).